Here is a 381-residue protein sequence, read N- to C-terminus: Alkanesulfonate monooxygenase (381 aa).

The protein belongs to the SsuD family. Homotetramer.

It catalyses the reaction an alkanesulfonate + FMNH2 + O2 = an aldehyde + FMN + sulfite + H2O + 2 H(+). Its function is as follows. Catalyzes the desulfonation of aliphatic sulfonates. This chain is Alkanesulfonate monooxygenase, found in Escherichia coli O9:H4 (strain HS).